Consider the following 527-residue polypeptide: MGQAPSSTAESNGRELDLRLWSPVIVAGGESMAVGNVVDRDFTGDLPDECLAHVFQFLGAGDRKRCSLVCKRWLLVDGQSRHRLSLDAKDEISSFLTSMFNRFDSVTKLALRCDRKSVSLSDEALAMISVRCLNLTRVKLRGCREITDLGMEDFAKNCKNLKKLSVGSCNFGAKGVNAMLEHCKLLEELSVKRLRGIHEAAELIHLPDDASSSSLRSICLKELVNGQVFEPLLATTRTLKTLKIIRCLGDWDKVLQMIANGKSSLSEIHLERLQVSDIGLSAISKCSNVETLHIVKTPECSNFGLIYVAERCKLLRKLHIDGWRTNRIGDEGLLSVAKHCLNLQELVLIGVNATHMSLAAIASNCEKLERLALCGSGTIGDTEIACIARKCGALRKFCIKGCPVSDRGIEALAVGCPNLVKLKVKKCKVVTGEIGDWLREQRRTLVVSMDGDETEAVVVVDGEVETVVEEPRVAQAGGIVAEIGSSNGGGGSRLAMIRSKLGFLAGRNLVTCTFRRWSHNDNASSST.

The F-box domain maps to 39–85; that stretch reads DRDFTGDLPDECLAHVFQFLGAGDRKRCSLVCKRWLLVDGQSRHRLS.

In terms of assembly, part of a SCF (ASK-cullin-F-box) protein ligase complex. Interacts with SKP1A/ASK1, SKP1B/ASK2 and ASK11.

It is found in the nucleus. The protein operates within protein modification; protein ubiquitination. Its function is as follows. Component of SCF(ASK-cullin-F-box) E3 ubiquitin ligase complexes, which may mediate the ubiquitination and subsequent proteasomal degradation of target proteins. The protein is F-box protein SKIP2 (SKIP2) of Arabidopsis thaliana (Mouse-ear cress).